We begin with the raw amino-acid sequence, 187 residues long: Protein SCM4 (187 aa).

The next 3 helical transmembrane spans lie at 11-31 (IAVS…VISI), 45-65 (VLCT…GAFG), and 80-100 (LLCG…VSLF). Over residues 114–134 (DLEKQKDEKLPQHHPEVKDGE) the composition is skewed to basic and acidic residues. Residues 114–135 (DLEKQKDEKLPQHHPEVKDGEA) are disordered. Residues 162–182 (MSLHMSIVTGITIFTFGKCIL) traverse the membrane as a helical segment.

The protein belongs to the ATG33 family.

It is found in the membrane. The sequence is that of Protein SCM4 (SCM4) from Saccharomyces cerevisiae (strain ATCC 204508 / S288c) (Baker's yeast).